The sequence spans 330 residues: Aspartate--ammonia ligase (330 aa).

It belongs to the class-II aminoacyl-tRNA synthetase family. AsnA subfamily.

Its subcellular location is the cytoplasm. The enzyme catalyses L-aspartate + NH4(+) + ATP = L-asparagine + AMP + diphosphate + H(+). The protein operates within amino-acid biosynthesis; L-asparagine biosynthesis; L-asparagine from L-aspartate (ammonia route): step 1/1. The chain is Aspartate--ammonia ligase from Escherichia coli O81 (strain ED1a).